The primary structure comprises 164 residues: Phosphopantetheine adenylyltransferase (164 aa).

Substrate is bound at residue S9. Residues 9–10 and H17 contribute to the ATP site; that span reads SF. Residues K41, L73, and K87 each coordinate substrate. Residues 88-90, E98, and 123-129 contribute to the ATP site; these read GLR and YSYLSSS.

It belongs to the bacterial CoaD family. In terms of assembly, homohexamer. The cofactor is Mg(2+).

It localises to the cytoplasm. The enzyme catalyses (R)-4'-phosphopantetheine + ATP + H(+) = 3'-dephospho-CoA + diphosphate. It functions in the pathway cofactor biosynthesis; coenzyme A biosynthesis; CoA from (R)-pantothenate: step 4/5. Its function is as follows. Reversibly transfers an adenylyl group from ATP to 4'-phosphopantetheine, yielding dephospho-CoA (dPCoA) and pyrophosphate. This Clostridium botulinum (strain Okra / Type B1) protein is Phosphopantetheine adenylyltransferase.